The sequence spans 783 residues: FYN-binding protein 1 (783 aa).

Composition is skewed to polar residues over residues 1 to 18 (MAKYNTGGNPTEDVSVNS) and 25 to 45 (GPNSSSGIQARKNLFNNQGNA). Positions 1-502 (MAKYNTGGNP…KEKKEQEIKK (502 aa)) are disordered. N6-acetyllysine is present on Lys3. Phosphoserine occurs at positions 28 and 46. Over residues 69–79 (SSEEKPDKEPK) the composition is skewed to basic and acidic residues. A Phosphoserine modification is found at Ser225. Composition is skewed to basic and acidic residues over residues 240 to 252 (PAREDSENKDHAG) and 278 to 290 (NGEEKKEDRKIDA). Residue Ser329 is modified to Phosphoserine. A compositionally biased stretch (pro residues) spans 345 to 363 (KPLPPLFTLGPPPPKPNRP). The interaction with SKAP1 stretch occupies residues 348–448 (PPLFTLGPPP…QDGVTHSDGA (101 aa)). Polar residues predominate over residues 374-387 (TSSGNSTSKGQTSY). Positions 392-424 (LPPPPPSHPASQPPLPASHPSQPPVPSLPPRNI) are enriched in pro residues. Positions 451–465 (LDEEQDSEGETYEDI) are enriched in acidic residues. Residues 456–507 (DSEGETYEDIEASKEREKKREKEEKKRLELEKKEQKEKEKKEQEIKKKFKLT) are a coiled coil. Ser457 bears the Phosphoserine mark. The SH2-binding signature appears at 462–465 (YEDI). Over residues 466 to 501 (EASKEREKKREKEEKKRLELEKKEQKEKEKKEQEIK) the composition is skewed to basic and acidic residues. Positions 469–505 (KEREKKREKEEKKRLELEKKEQKEKEKKEQEIKKKFK) match the Nuclear localization signal motif. Residues 511 to 572 (QVIHLAKACC…KTTAVEIDYD (62 aa)) enclose the SH3 1 domain. Tyr571 is subject to Phosphotyrosine. A phosphoserine mark is found at Ser573 and Ser580. Residues 595–598 (YDDV) carry the SH2-binding; to LCP2 motif. The interval 598–678 (VAEQDDISSH…GTNVGKAKTE (81 aa)) is disordered. 2 stretches are compositionally biased toward acidic residues: residues 620–635 (PDDDIYDGIEEEDADD) and 646–656 (MGDEVYDDVDT). The short motif at 625-628 (YDGI) is the SH2-binding; to FYN element. Residue Tyr651 is modified to Phosphotyrosine. The short motif at 674 to 700 (KAKTEEKDLKKLKKQEKEEKDFRKKFK) is the Nuclear localization signal element. Residues 700–768 (KYDGEIRVLY…LRSYLADNDG (69 aa)) form the SH3 2 domain.

Part of a complex consisting of SKAP2, FYB1 and PTPNS1. Part of a complex consisting of SKAP2, FYB1 and LILRB3. Part of a complex consisting of SKAP1, FYB1 and CLNK. Interacts with CLNK (via its SH2 domain); this interaction allows SKAP1 and FYB1 to recruit FYN to the complex, thus promoting the phosphorylation of CLNK by FYN. Interacts with FYN. Interacts with LCP2. Interacts with SKAP1. Interacts with SKAP2. Interacts with FASLG. Interacts with EVL. Interacts with TMEM47. Interacts with LCK. T-cell receptor ligation leads to increased tyrosine phosphorylation. In terms of tissue distribution, expressed in hematopoietic tissues such as myeloid and T-cells, spleen and thymus. Not expressed in B-cells, nor in non-lymphoid tissues.

Its subcellular location is the cytoplasm. It localises to the nucleus. It is found in the cell junction. In terms of biological role, acts as an adapter protein of the FYN and LCP2 signaling cascades in T-cells. May play a role in linking T-cell signaling to remodeling of the actin cytoskeleton. Modulates the expression of IL2. Involved in platelet activation. Prevents the degradation of SKAP1 and SKAP2. May be involved in high affinity immunoglobulin epsilon receptor signaling in mast cells. The chain is FYN-binding protein 1 from Homo sapiens (Human).